A 248-amino-acid chain; its full sequence is MNQTNFGFKKIKANEKQSLVNSVFSNVADKYDLMNDLMSFGMHRLWKDEFIRQIPNLNSNILDVASGSGDIALKLAKKAKDRGSNISLTLSDINEEMLRQAKKKSIDLNLFQNLKFTVASAEELPFPDNSFDYYTIAFGIRNVPDINKALKEAYRVLKPMGKFICLEFSKVKESLLQDFYKFYSFNVIPKIGKIITGNKEAYDYLVESIDLFPSQDEFRIMIKEAGFEEINYKNLSGGIVAIHSAYKL.

S-adenosyl-L-methionine is bound by residues S68 and D92.

The protein belongs to the class I-like SAM-binding methyltransferase superfamily. MenG/UbiE family.

The enzyme catalyses a 2-demethylmenaquinol + S-adenosyl-L-methionine = a menaquinol + S-adenosyl-L-homocysteine + H(+). The catalysed reaction is a 2-methoxy-6-(all-trans-polyprenyl)benzene-1,4-diol + S-adenosyl-L-methionine = a 5-methoxy-2-methyl-3-(all-trans-polyprenyl)benzene-1,4-diol + S-adenosyl-L-homocysteine + H(+). It participates in quinol/quinone metabolism; menaquinone biosynthesis; menaquinol from 1,4-dihydroxy-2-naphthoate: step 2/2. Its pathway is cofactor biosynthesis; ubiquinone biosynthesis. Methyltransferase required for the conversion of demethylmenaquinol (DMKH2) to menaquinol (MKH2) and the conversion of 2-polyprenyl-6-methoxy-1,4-benzoquinol (DDMQH2) to 2-polyprenyl-3-methyl-6-methoxy-1,4-benzoquinol (DMQH2). This is Ubiquinone/menaquinone biosynthesis C-methyltransferase UbiE from Rickettsia bellii (strain OSU 85-389).